The following is a 326-amino-acid chain: Pancreas transcription factor 1 subunit alpha (326 aa).

The region spanning 162–214 (QLRQAANVRERRRMQSINDAFEGLRSHIPTLPYEKRLSKVDTLRLAIGYINFL) is the bHLH domain. A compositionally biased stretch (gly residues) spans 229–240 (TGGCGGPGGSRH). 2 disordered regions span residues 229 to 249 (TGGC…PGNQ) and 304 to 326 (DPRK…EFVS).

In terms of assembly, component of the pancreas transcription factor 1 complex (PTF1) which is composed of TCF3/p75, TCF12/p64 and PTF1A/p48. TCF3 is responsible for the nuclear import of the p48/p64 complex. Interacts with TCF3 and RBPSUH/RBP-Jkappa. As to expression, exocrine pancreas-specific. Expressed in azaserine-induced pancreatic tumors (at protein level). Expressed in AR42J cells but not in ARIP, DSL6A, or DSL6B cells. Down-regulation is associated with the change of an azaserine-induced acinar cell carcinoma to a ductal phenotype.

Its subcellular location is the nucleus. The protein localises to the cytoplasm. Its function is as follows. Transcription factor implicated in the cell fate determination in various organs. Binds to the E-box consensus sequence 5'-CANNTG-3'. Plays a role in early and late pancreas development and differentiation. Important for determining whether cells allocated to the pancreatic buds continue towards pancreatic organogenesis or revert back to duodenal fates. May be involved in the maintenance of exocrine pancreas-specific gene expression including ELA1 and amylase. Required for the formation of pancreatic acinar and ductal cells. Plays an important role in cerebellar development. Directly regulated by FOXN4 and RORC during retinal development, FOXN4-PTF1A pathway plays a central role in directing the differentiation of retinal progenitors towards horizontal and amacrine fates. This chain is Pancreas transcription factor 1 subunit alpha (Ptf1a), found in Rattus norvegicus (Rat).